A 159-amino-acid polypeptide reads, in one-letter code: 2-C-methyl-D-erythritol 2,4-cyclodiphosphate synthase (159 aa).

A divalent metal cation is bound by residues Asp-8 and His-10. 4-CDP-2-C-methyl-D-erythritol 2-phosphate is bound by residues 8–10 and 34–35; these read DVH and HS. Residue His-42 participates in a divalent metal cation binding. 4-CDP-2-C-methyl-D-erythritol 2-phosphate contacts are provided by residues 56–58, 61–65, 100–106, 132–135, Phe-139, and Arg-142; these read DIG, FPDTD, AQAPKML, and TTTE.

This sequence belongs to the IspF family. In terms of assembly, homotrimer. It depends on a divalent metal cation as a cofactor.

It catalyses the reaction 4-CDP-2-C-methyl-D-erythritol 2-phosphate = 2-C-methyl-D-erythritol 2,4-cyclic diphosphate + CMP. It functions in the pathway isoprenoid biosynthesis; isopentenyl diphosphate biosynthesis via DXP pathway; isopentenyl diphosphate from 1-deoxy-D-xylulose 5-phosphate: step 4/6. Its function is as follows. Involved in the biosynthesis of isopentenyl diphosphate (IPP) and dimethylallyl diphosphate (DMAPP), two major building blocks of isoprenoid compounds. Catalyzes the conversion of 4-diphosphocytidyl-2-C-methyl-D-erythritol 2-phosphate (CDP-ME2P) to 2-C-methyl-D-erythritol 2,4-cyclodiphosphate (ME-CPP) with a corresponding release of cytidine 5-monophosphate (CMP). In Citrobacter koseri (strain ATCC BAA-895 / CDC 4225-83 / SGSC4696), this protein is 2-C-methyl-D-erythritol 2,4-cyclodiphosphate synthase.